We begin with the raw amino-acid sequence, 271 residues long: Energy-coupling factor transporter ATP-binding protein EcfA (271 aa).

An ABC transporter domain is found at 2–231 (ISIQNLTFYY…PLFLQQYKLN (230 aa)). An ATP-binding site is contributed by 34-41 (GHNGSGKS).

It belongs to the ABC transporter superfamily. Energy-coupling factor EcfA family. In terms of assembly, forms a stable energy-coupling factor (ECF) transporter complex composed of 2 membrane-embedded substrate-binding proteins (S component), 2 ATP-binding proteins (A component) and 2 transmembrane proteins (T component).

The protein localises to the cell membrane. Its function is as follows. ATP-binding (A) component of a common energy-coupling factor (ECF) ABC-transporter complex. Unlike classic ABC transporters this ECF transporter provides the energy necessary to transport a number of different substrates. The polypeptide is Energy-coupling factor transporter ATP-binding protein EcfA (Onion yellows phytoplasma (strain OY-M)).